Reading from the N-terminus, the 184-residue chain is MKNVTDSFVSLVNWPFAGSFGLNTDILATNPINLSVVLGVLIFFGKGVLSDLLDNRKLRILNSIRNSEELQRGAIERLEKARARLRKIEIEADQFRVNGYSEIEREKFNLINSTYKTLDQLENYKNETIHFEQQRAINQVRQRVFQQALQGALGTLNSCLNKELHLRTISANIGMFGAMKEITD.

The chain crosses the membrane as a helical span at residues 27–49 (LATNPINLSVVLGVLIFFGKGVL).

The protein belongs to the ATPase B chain family. As to quaternary structure, F-type ATPases have 2 components, F(1) - the catalytic core - and F(0) - the membrane proton channel. F(1) has five subunits: alpha(3), beta(3), gamma(1), delta(1), epsilon(1). F(0) has four main subunits: a(1), b(1), b'(1) and c(10-14). The alpha and beta chains form an alternating ring which encloses part of the gamma chain. F(1) is attached to F(0) by a central stalk formed by the gamma and epsilon chains, while a peripheral stalk is formed by the delta, b and b' chains.

The protein localises to the plastid. It localises to the chloroplast thylakoid membrane. Functionally, f(1)F(0) ATP synthase produces ATP from ADP in the presence of a proton or sodium gradient. F-type ATPases consist of two structural domains, F(1) containing the extramembraneous catalytic core and F(0) containing the membrane proton channel, linked together by a central stalk and a peripheral stalk. During catalysis, ATP synthesis in the catalytic domain of F(1) is coupled via a rotary mechanism of the central stalk subunits to proton translocation. Its function is as follows. Component of the F(0) channel, it forms part of the peripheral stalk, linking F(1) to F(0). The chain is ATP synthase subunit b, chloroplastic from Citrus sinensis (Sweet orange).